The following is an 802-amino-acid chain: Neuronal PAS domain-containing protein 4 (802 aa).

Positions 1-13 (MYRSTKGASKARR) are basic motif; degenerate. Residues 1–53 (MYRSTKGASKARRDQINAEIRNLKELLPLAEADKVRLSYLHIMSLACIYTRKG) form the bHLH domain. A coiled-coil region spans residues 5–38 (TKGASKARRDQINAEIRNLKELLPLAEADKVRLS). The tract at residues 14–53 (DQINAEIRNLKELLPLAEADKVRLSYLHIMSLACIYTRKG) is helix-loop-helix motif. 2 PAS domains span residues 70–144 (SAQE…LDTD) and 203–273 (PGPG…LAES). Residues 278–317 (AEMVVRLQAKTGGWAWIYCLLYSEGPEGPITANNYPISDM) enclose the PAC domain. Polar residues-rich tracts occupy residues 466–476 (FSDQLTPSSAT), 506–518 (STFP…STAT), and 532–555 (TPPS…QLSP). Disordered regions lie at residues 466 to 485 (FSDQ…TSPL) and 506 to 555 (STFP…QLSP). The stretch at 624–648 (YSEKEQNEIDRLIQQISQLAQGMDR) forms a coiled coil. The disordered stretch occupies residues 717 to 749 (LSTPDPSEEWGSGDPEAEGPGGAPSPCNNLSPE).

As to quaternary structure, efficient DNA binding requires dimerization with another bHLH protein. Heterodimer; forms a heterodimer with ARNT, ARNT2 or BMAL1. Ubiquitinated, leading to degradation by the proteosome. As to expression, brain.

It is found in the nucleus. Functionally, transcription factor expressed in neurons of the brain that regulates the excitatory-inhibitory balance within neural circuits and is required for contextual memory in the hippocampus. Plays a key role in the structural and functional plasticity of neurons. Acts as an early-response transcription factor in both excitatory and inhibitory neurons, where it induces distinct but overlapping sets of late-response genes in these two types of neurons, allowing the synapses that form on inhibitory and excitatory neurons to be modified by neuronal activity in a manner specific to their function within a circuit, thereby facilitating appropriate circuit responses to sensory experience. In excitatory neurons, activates transcription of BDNF, which in turn controls the number of GABA-releasing synapses that form on excitatory neurons, thereby promoting an increased number of inhibitory synapses on excitatory neurons. In inhibitory neurons, regulates a distinct set of target genes that serve to increase excitatory input onto somatostatin neurons, probably resulting in enhanced feedback inhibition within cortical circuits. The excitatory and inhibitory balance in neurons affects a number of processes, such as short-term and long-term memory, acquisition of experience, fear memory, response to stress and social behavior. Acts as a regulator of dendritic spine development in olfactory bulb granule cells in a sensory-experience-dependent manner by regulating expression of MDM2. Efficient DNA binding requires dimerization with another bHLH protein, such as ARNT, ARNT2 or BMAL1. Can activate the CME (CNS midline enhancer) element. The polypeptide is Neuronal PAS domain-containing protein 4 (Homo sapiens (Human)).